The sequence spans 162 residues: MKLNEIRDNEGATKDRMRVGRGIGSGKGKTAGRGVKGQKARTGVAIKGFEGGQMPLHRRLPKRGFNNPGATDLNEVNVGRIQQAVDSGKLDPSAPVTVEALVAAGVVSRVRDGVKILGVGELTASLTFQVARASKSAVAAIEKAGGSVTQSLAATDGAVASA.

Basic and acidic residues predominate over residues 1 to 18 (MKLNEIRDNEGATKDRMR). The disordered stretch occupies residues 1–42 (MKLNEIRDNEGATKDRMRVGRGIGSGKGKTAGRGVKGQKART). The segment covering 21–35 (RGIGSGKGKTAGRGV) has biased composition (gly residues).

The protein belongs to the universal ribosomal protein uL15 family. In terms of assembly, part of the 50S ribosomal subunit.

Its function is as follows. Binds to the 23S rRNA. The polypeptide is Large ribosomal subunit protein uL15 (Methylobacterium sp. (strain 4-46)).